The primary structure comprises 590 residues: Melanophilin (590 aa).

A RabBD domain is found at 4 to 124 (RLDLSTLTDE…IGSLEWYYQH (121 aa)). The FYVE-type zinc-finger motif lies at 64–107 (CARCLQPYRLLLNSRRQCLECSLFVCKSCSHAHPEEQGWLCDPC). 5 disordered regions span residues 147–182 (GGGGSEPSLEEGNGDSEQTDEDGDLDTEARDQPLNS), 215–276 (SVPE…AELD), 311–335 (DTSDEDSIQGPRAASQHSKRRARTV), 361–472 (VLPP…SEIS), and 485–590 (GLTV…AQQP). The segment covering 154–172 (SLEEGNGDSEQTDEDGDLD) has biased composition (acidic residues). The segment covering 215 to 238 (SVPESAHSLQSLSGEPYSEDTTSL) has biased composition (polar residues). Positions 339–485 (QILELNKRMS…SRIAALRAAG (147 aa)) form a coiled coil. Positions 391 to 401 (LTSNISGSSTS) are enriched in low complexity. Residues 424-433 (GHMETQERNP) show a composition bias toward basic and acidic residues.

In terms of assembly, binds RAB27A that has been activated by GTP-binding via its N-terminus. Binds MYO5A via its C-terminal coiled coil domain. Highly expressed in embryos at day 7; not detectable at day 11. Highly expressed in adult stomach; detected at lower levels in kidney, lung, skin and small intestine. Detected in melanocytes.

The protein resides in the melanosome. In terms of biological role, rab effector protein involved in melanosome transport. Serves as link between melanosome-bound RAB27A and the motor protein MYO5A. This Mus musculus (Mouse) protein is Melanophilin (Mlph).